Here is a 684-residue protein sequence, read N- to C-terminus: Coiled-coil domain-containing protein 62 (684 aa).

2 coiled-coil regions span residues 11-160 (RQNI…QALT) and 199-322 (TCIV…ESKA). The segment at 579–603 (SLGSSKSALREDETESSSNKKNSPT) is disordered. A compositionally biased stretch (polar residues) spans 594 to 603 (SSSNKKNSPT). Short sequence motifs (LXXLL motif) lie at residues 634–638 (LQRLL) and 650–654 (LSTLL). The disordered stretch occupies residues 657 to 684 (SHENLTGSATNKSEVPEESAQKNTFVSY). A compositionally biased stretch (polar residues) spans 659–669 (ENLTGSATNKS).

In terms of assembly, interacts with ESR1 and ESR2 in the presence of estradiol/E2. The interaction with ESR2 recruits CCDC62 to ER target genes, including cyclin-D1/CCND1 AP-1 promoter. Interacts with GOPC. In terms of tissue distribution, highly expressed in adult testis. Expressed in both prostate epithelial and stromal cells, with predominant expression in epithelial cells (at protein level). Not detected in prostate by RT-PCR. Overexpressed in various cancers.

It is found in the cytoplasm. Its subcellular location is the nucleus. The protein resides in the cytoplasmic vesicle. The protein localises to the secretory vesicle. It localises to the acrosome. Its function is as follows. Nuclear receptor coactivator that can enhance preferentially estrogen receptors ESR1 and ESR2 transactivation. Also modulates progesterone/PGR, glucocorticoid/NR3C1 and androgen/AR receptors transactivation, although at lower level; little effect on vitamin D receptor/VDR. Required for normal spermiogenesis. It probably plays a role in acrosome formation. The polypeptide is Coiled-coil domain-containing protein 62 (CCDC62) (Homo sapiens (Human)).